A 198-amino-acid chain; its full sequence is Beta-crystallin A1-2 (198 aa).

Residues 1–13 form an N-terminal arm region; that stretch reads MAQINPLPVPLGP. 2 Beta/gamma crystallin 'Greek key' domains span residues 14–53 and 54–100; these read WKITVYDQENFQGKRMEFTSSCANIMECGFDNIRSLKVEC and GAWI…RPIC. The segment at 101–106 is connecting peptide; the sequence is SANHIE. 2 Beta/gamma crystallin 'Greek key' domains span residues 107–148 and 149–197; these read SKLV…KVQC and GAWV…RRIQ.

This sequence belongs to the beta/gamma-crystallin family. As to quaternary structure, homo/heterodimer, or complexes of higher-order. The structure of beta-crystallin oligomers seems to be stabilized through interactions between the N-terminal arms. The N-terminus is blocked.

Its function is as follows. Crystallins are the dominant structural components of the vertebrate eye lens. The sequence is that of Beta-crystallin A1-2 from Aquarana catesbeiana (American bullfrog).